Here is a 118-residue protein sequence, read N- to C-terminus: Galanin peptides (118 aa).

A signal peptide spans 1 to 19; sequence MHRCVGGVCVSLIVCAFLT. The propeptide occupies 20-30; sequence ETLGMVIAAKE. Residue Ala61 is modified to Alanine amide.

Belongs to the galanin family. In terms of tissue distribution, strongly expressed in brain and stomach, moderately in the eye, and very weakly in heart, kidney and gills. Not detected in liver.

It is found in the secreted. Its function is as follows. Endocrine hormone of the central and peripheral nervous systems that binds and activates the G protein-coupled receptors GALR1 (galr1a and galr1b) and GALR2 (galr2a and galr2b). This small neuropeptide may regulate diverse physiologic functions including contraction of smooth muscle of the gastrointestinal and genitourinary tract, growth hormone and insulin release and adrenal secretion. This Danio rerio (Zebrafish) protein is Galanin peptides.